The primary structure comprises 300 residues: Coatomer subunit epsilon (300 aa).

The protein belongs to the COPE family. Oligomeric complex that consists of at least the alpha, beta, beta', gamma, delta, epsilon and zeta subunits.

The protein localises to the cytoplasm. It localises to the golgi apparatus membrane. The protein resides in the cytoplasmic vesicle. It is found in the COPI-coated vesicle membrane. Its function is as follows. The coatomer is a cytosolic protein complex that binds to dilysine motifs and reversibly associates with Golgi non-clathrin-coated vesicles, which further mediate biosynthetic protein transport from the ER, via the Golgi up to the trans Golgi network. The coatomer complex is required for budding from Golgi membranes, and is essential for the retrograde Golgi-to-ER transport of dilysine-tagged proteins. The chain is Coatomer subunit epsilon (cope) from Dictyostelium discoideum (Social amoeba).